We begin with the raw amino-acid sequence, 328 residues long: Embigin (328 aa).

Positions 1-33 are cleaved as a signal peptide; that stretch reads MRSHTGLRALVAPGCSLLLLYLLAATRPDRAVG. Residues 34 to 264 are Extracellular-facing; sequence DPADSAFTSL…VLSFMVPLKP (231 aa). Asn55, Asn62, Asn75, Asn100, Asn117, Asn189, Asn196, Asn214, and Asn219 each carry an N-linked (GlcNAc...) asparagine glycan. 2 Ig-like domains span residues 67-160 and 159-254; these read EQTR…RVPK and PKVH…IKLV. Intrachain disulfides connect Cys88–Cys144 and Cys180–Cys238. A helical membrane pass occupies residues 265–285; the sequence is FLAIIAEVILLVAIILLCEVY. Topologically, residues 286-328 are cytoplasmic; it reads TQKKKNDPDDGKEFEQIEQLKSDDSNGIENNVPRYRKTDSGDQ. Basic and acidic residues predominate over residues 289-309; the sequence is KKNDPDDGKEFEQIEQLKSDD. Positions 289-328 are disordered; the sequence is KKNDPDDGKEFEQIEQLKSDDSNGIENNVPRYRKTDSGDQ. The residue at position 310 (Ser310) is a Phosphoserine.

As to quaternary structure, interacts with SLC16A1, SLC16A6 and SLC16A7. Post-translationally, N-glycosylated. Detected in prostate, mammary gland and erythrocytes (at protein level). Detected in testis, brain, prostate, heart, kidney, liver, mammary gland and lung.

It localises to the cell membrane. The protein localises to the synapse. Plays a role in the outgrowth of motoneurons and in the formation of neuromuscular junctions. Following muscle denervation, promotes nerve terminal sprouting and the formation of additional acetylcholine receptor clusters at synaptic sites without affecting terminal Schwann cell number or morphology. Delays the retraction of terminal sprouts following re-innervation of denervated endplates. Plays a role in targeting the monocarboxylate transporters SLC16A1, SLC16A6 and SLC16A7 to the cell membrane. This is Embigin (Emb) from Rattus norvegicus (Rat).